A 564-amino-acid polypeptide reads, in one-letter code: Benomyl/methotrexate resistance protein (564 aa).

The tract at residues 60 to 101 (IDNQGEPNSSQSSSSNNTIVDNNNNNNNDVDGDKIVVTWDGD) is disordered. The segment covering 67 to 88 (NSSQSSSSNNTIVDNNNNNNND) has biased composition (low complexity). 12 helical membrane-spanning segments follow: residues 116-136 (AFFI…SAVY), 153-173 (VATL…LVFS), 184-204 (TSIY…TALV), 210-229 (LCIL…ATGG), 241-262 (LPVG…GPFF), 274-294 (WTFW…CFTL), 358-374 (IYIA…FEVF), 393-411 (YMSI…IPVI), 431-451 (IPIA…FGWS), 457-476 (HWVG…FLIF), 489-506 (PHYI…RSVI), and 530-551 (WGSS…LFYL).

It belongs to the major facilitator superfamily. CAR1 family.

Its subcellular location is the membrane. Probable transporter. Confers resistance to benomyl and methotrexate. This is Benomyl/methotrexate resistance protein (MDR1) from Candida albicans (Yeast).